Reading from the N-terminus, the 239-residue chain is Thymidylate kinase (239 aa).

10 to 17 lines the ATP pocket; it reads GINGVGKS.

The protein belongs to the thymidylate kinase family.

The catalysed reaction is dTMP + ATP = dTDP + ADP. It participates in pyrimidine metabolism; dTTP biosynthesis. Catalyzes the conversion of dTMP to dTDP. The polypeptide is Thymidylate kinase (TMK) (African swine fever virus (isolate Warthog/Namibia/Wart80/1980) (ASFV)).